Consider the following 235-residue polypeptide: Triosephosphate isomerase (235 aa).

7 to 9 serves as a coordination point for substrate; the sequence is NFK. The active-site Electrophile is H92. Residue E161 is the Proton acceptor of the active site. Residues G167 and S197 each coordinate substrate.

The protein belongs to the triosephosphate isomerase family. Homodimer.

It is found in the cytoplasm. The catalysed reaction is D-glyceraldehyde 3-phosphate = dihydroxyacetone phosphate. The protein operates within carbohydrate biosynthesis; gluconeogenesis. It participates in carbohydrate degradation; glycolysis; D-glyceraldehyde 3-phosphate from glycerone phosphate: step 1/1. Involved in the gluconeogenesis. Catalyzes stereospecifically the conversion of dihydroxyacetone phosphate (DHAP) to D-glyceraldehyde-3-phosphate (G3P). The sequence is that of Triosephosphate isomerase from Helicobacter hepaticus (strain ATCC 51449 / 3B1).